Reading from the N-terminus, the 357-residue chain is Glutamate 5-kinase (357 aa).

ATP is bound at residue lysine 7. Substrate is bound by residues serine 43, aspartate 130, and asparagine 142. ATP-binding positions include 162–163 (TD) and 205–211 (TGGMTTK). One can recognise a PUA domain in the interval 270–341 (EGELCLDQGA…QALSVVTDAE (72 aa)).

Belongs to the glutamate 5-kinase family.

The protein localises to the cytoplasm. The enzyme catalyses L-glutamate + ATP = L-glutamyl 5-phosphate + ADP. It functions in the pathway amino-acid biosynthesis; L-proline biosynthesis; L-glutamate 5-semialdehyde from L-glutamate: step 1/2. Catalyzes the transfer of a phosphate group to glutamate to form L-glutamate 5-phosphate. This chain is Glutamate 5-kinase, found in Synechococcus sp. (strain CC9902).